The primary structure comprises 477 residues: Small ribosomal subunit protein uS5m (477 aa).

Belongs to the universal ribosomal protein uS5 family. In terms of assembly, component of the mitochondrial small ribosomal subunit (mt-SSU). Mature N.crassa 74S mitochondrial ribosomes consist of a small (37S) and a large (54S) subunit. The 37S small subunit contains a 16S ribosomal RNA (16S mt-rRNA) and 32 different proteins. The 54S large subunit contains a 23S rRNA (23S mt-rRNA) and 42 different proteins. uS3m, uS4m and uS5m form the narrow entry site of the mRNA channel.

It is found in the mitochondrion. In terms of biological role, component of the mitochondrial ribosome (mitoribosome), a dedicated translation machinery responsible for the synthesis of mitochondrial genome-encoded proteins, including at least some of the essential transmembrane subunits of the mitochondrial respiratory chain. The mitoribosomes are attached to the mitochondrial inner membrane and translation products are cotranslationally integrated into the membrane. This is Small ribosomal subunit protein uS5m (mrps5) from Neurospora crassa (strain ATCC 24698 / 74-OR23-1A / CBS 708.71 / DSM 1257 / FGSC 987).